A 425-amino-acid polypeptide reads, in one-letter code: Enolase (425 aa).

Position 164 (Gln164) interacts with (2R)-2-phosphoglycerate. Glu208 serves as the catalytic Proton donor. Mg(2+) contacts are provided by Asp243, Glu286, and Asp312. (2R)-2-phosphoglycerate-binding residues include Lys337, Arg366, Ser367, and Lys388. The active-site Proton acceptor is Lys337.

This sequence belongs to the enolase family. It depends on Mg(2+) as a cofactor.

The protein resides in the cytoplasm. Its subcellular location is the secreted. The protein localises to the cell surface. The enzyme catalyses (2R)-2-phosphoglycerate = phosphoenolpyruvate + H2O. It functions in the pathway carbohydrate degradation; glycolysis; pyruvate from D-glyceraldehyde 3-phosphate: step 4/5. Catalyzes the reversible conversion of 2-phosphoglycerate (2-PG) into phosphoenolpyruvate (PEP). It is essential for the degradation of carbohydrates via glycolysis. The sequence is that of Enolase from Methanococcus aeolicus (strain ATCC BAA-1280 / DSM 17508 / OCM 812 / Nankai-3).